The primary structure comprises 223 residues: Adenylate kinase (223 aa).

10 to 15 provides a ligand contact to ATP; that stretch reads GSGKGT. Residues 30–59 are NMP; it reads ESGAIFRKHIGGGTELGMKAKEYIDKGELV. Residues serine 31, arginine 36, 57-59, 84-87, and glutamine 91 contribute to the AMP site; these read ELV and GFPR. An LID region spans residues 125–164; that stretch reads GRRLCENDPNHPNNKFIDAIKPDGDKCRVCGGALSERADD. Arginine 126 lines the ATP pocket. AMP-binding residues include arginine 161 and arginine 173. Glycine 209 contributes to the ATP binding site.

Belongs to the adenylate kinase family. In terms of assembly, monomer.

The protein localises to the cytoplasm. It carries out the reaction AMP + ATP = 2 ADP. Its pathway is purine metabolism; AMP biosynthesis via salvage pathway; AMP from ADP: step 1/1. Functionally, catalyzes the reversible transfer of the terminal phosphate group between ATP and AMP. Plays an important role in cellular energy homeostasis and in adenine nucleotide metabolism. The polypeptide is Adenylate kinase (Maridesulfovibrio salexigens (strain ATCC 14822 / DSM 2638 / NCIMB 8403 / VKM B-1763) (Desulfovibrio salexigens)).